A 439-amino-acid polypeptide reads, in one-letter code: Rhodopsin (439 aa).

Asn1 is a glycosylation site (N-linked (GlcNAc...) asparagine). At 1–26 (NETWWYNPYMDIHSHWKQFDQVPAAV) the chain is on the extracellular side. A helical transmembrane segment spans residues 27-51 (YYSLGIFIAICGIIGCAGNGIVIYL). Residues 52–63 (FTKTKSLQTPAN) lie on the Cytoplasmic side of the membrane. Residues 64–90 (MFIINLAFSDFTFSLVNGFPMMTISCF) form a helical membrane-spanning segment. The Extracellular segment spans residues 91 to 102 (LKHWVFGQAACK). A disulfide bond links Cys101 and Cys179. A helical transmembrane segment spans residues 103–124 (VYGLIGGIFGLTSIMTMTMISI). The 'Ionic lock' involved in activated form stabilization motif lies at 125–127 (DRY). Topologically, residues 125-144 (DRYNVIRRPMSASKKMSHRK) are cytoplasmic. A helical membrane pass occupies residues 145–165 (AFIMIVFVWIWSTIWAIGPIF). Topologically, residues 166–192 (GWGAYQLEGVLCNCSFDYITRDASTRS) are extracellular. The chain crosses the membrane as a helical span at residues 193 to 217 (NIVCMYIFAFMFPIVVIFFCYFNIV). Topologically, residues 218-254 (MSVSNHEKEMAAMAKRLNAKELRKAQAGASAEMKLAK) are cytoplasmic. Residues 255-276 (ISIVIVTQSLLSWSPYAIVALL) form a helical membrane-spanning segment. Residues 277–286 (AQFGPIEWVT) are Extracellular-facing. The helical transmembrane segment at 287-308 (PYAAQLPVMFAKASAIHNPMIY) threads the bilayer. Lys298 is modified (N6-(retinylidene)lysine). Residues 309–439 (SVSHPKFREA…PQAAPPQGVD (131 aa)) are Cytoplasmic-facing. 2 S-palmitoyl cysteine lipidation sites follow: Cys329 and Cys330. The segment covering 369-381 (MMQKMQAQQQQQP) has biased composition (low complexity). The interval 369–439 (MMQKMQAQQQ…PQAAPPQGVD (71 aa)) is disordered. The segment covering 382–433 (AYPPQGYPPQGYPPPPPQGYPPQGYPPQGYPPQGYPPPPQGPPPQGPPPQAA) has biased composition (pro residues).

The protein belongs to the G-protein coupled receptor 1 family. Opsin subfamily. In terms of processing, contains one covalently linked retinal chromophore. Upon light absorption, the covalently bound 11-cis-retinal is converted to all-trans-retinal. After hydrolysis of the Schiff base and release of the covalently bound all-trans-retinal, active rhodopsin is regenerated by binding of a fresh molecule of 11-cis-retinal.

The protein resides in the cell projection. It localises to the rhabdomere membrane. Photoreceptor required for image-forming vision at low light intensity. Light-induced isomerization of 11-cis to all-trans retinal triggers a conformational change that activates signaling via G-proteins. Signaling mediates the activation of phospholipase C. Subsequent receptor phosphorylation mediates displacement of the bound G-protein alpha subunit by arrestin and terminates signaling. The chain is Rhodopsin (RHO) from Alloteuthis subulata (Squid).